The following is a 170-amino-acid chain: Peroxidase 2 (170 aa).

Asn9 is a glycosylation site (N-linked (GlcNAc...) asparagine). A heme b-binding site is contributed by His24. Residue Thr25 participates in Ca(2+) binding. A disulfide bond links Cys31 and Cys59. Residues Asp73, Thr76, and Asp81 each coordinate Ca(2+).

It belongs to the peroxidase family. Classical plant (class III) peroxidase subfamily. Ca(2+) is required as a cofactor. Heme b serves as cofactor.

The catalysed reaction is 2 a phenolic donor + H2O2 = 2 a phenolic radical donor + 2 H2O. Removal of H(2)O(2), oxidation of toxic reductants, biosynthesis and degradation of lignin, suberization, auxin catabolism, response to environmental stresses such as wounding, pathogen attack and oxidative stress. These functions might be dependent on each isozyme/isoform in each plant tissue. In terms of biological role, involved in defense response to powdery meldew fungus. This is Peroxidase 2 from Hordeum vulgare (Barley).